The primary structure comprises 176 residues: Ribosome maturation factor RimM (176 aa).

The 74-residue stretch at 101 to 174 (EGHYYIYQLL…EIRVELPPGL (74 aa)) folds into the PRC barrel domain.

This sequence belongs to the RimM family. As to quaternary structure, binds ribosomal protein uS19.

It localises to the cytoplasm. In terms of biological role, an accessory protein needed during the final step in the assembly of 30S ribosomal subunit, possibly for assembly of the head region. Essential for efficient processing of 16S rRNA. May be needed both before and after RbfA during the maturation of 16S rRNA. It has affinity for free ribosomal 30S subunits but not for 70S ribosomes. In Moorella thermoacetica (strain ATCC 39073 / JCM 9320), this protein is Ribosome maturation factor RimM.